A 147-amino-acid polypeptide reads, in one-letter code: MKIWVDADACPKVIRETIVRAAERTGVECTFVANHLVPVPKRNNIHSIQVPSGFDIADDEIVKRTEPGDLVITSDIPLADEVITKGGQALSSRGELYTKETIKARLNIRDFMDTMRSSGIQTGGPSALSQTDRREFANHLDRLLAKR.

The protein belongs to the UPF0178 family.

The protein is UPF0178 protein VS_2364 of Vibrio atlanticus (strain LGP32) (Vibrio splendidus (strain Mel32)).